The following is a 126-amino-acid chain: Class I hydrophobin 1 (126 aa).

An N-terminal signal peptide occupies residues 1–16 (MQYMTIVAFLAATVAA). Disulfide bonds link Cys-38-Cys-100, Cys-46-Cys-94, Cys-47-Cys-75, and Cys-101-Cys-119.

Belongs to the fungal hydrophobin family.

It localises to the secreted. The protein localises to the cell wall. Functionally, aerial growth, conidiation, and dispersal of filamentous fungi in the environment rely upon a capability of their secreting small amphipathic proteins called hydrophobins (HPBs) with low sequence identity. Class I can self-assemble into an outermost layer of rodlet bundles on aerial cell surfaces, conferring cellular hydrophobicity that supports fungal growth, development and dispersal; whereas Class II form highly ordered films at water-air interfaces through intermolecular interactions but contribute nothing to the rodlet structure. HYD1 and HYD2 are required for the structural integrity of the long aerial chains of microconidia. Does not seem to be important for the ability to cause seedling disease. The protein is Class I hydrophobin 1 of Gibberella moniliformis (Maize ear and stalk rot fungus).